The chain runs to 429 residues: Phosphoribosylamine--glycine ligase (429 aa).

The ATP-grasp domain maps to 109 to 316; that stretch reads KDFLARHNIP…LVELCLAACE (208 aa). Residue 135-196 coordinates ATP; the sequence is LREKGAPIVI…EEFLDGEEAS (62 aa). A disordered region spans residues 212-236; that stretch reads SQDHKRVGDKDTGPNTGGMGAYSPA. The segment covering 213 to 223 has biased composition (basic and acidic residues); that stretch reads QDHKRVGDKDT. Residues E286 and N288 each contribute to the Mg(2+) site.

This sequence belongs to the GARS family. As to quaternary structure, monomer. Requires Mg(2+) as cofactor. Mn(2+) is required as a cofactor.

The catalysed reaction is 5-phospho-beta-D-ribosylamine + glycine + ATP = N(1)-(5-phospho-beta-D-ribosyl)glycinamide + ADP + phosphate + H(+). Its pathway is purine metabolism; IMP biosynthesis via de novo pathway; N(1)-(5-phospho-D-ribosyl)glycinamide from 5-phospho-alpha-D-ribose 1-diphosphate: step 2/2. The polypeptide is Phosphoribosylamine--glycine ligase (Escherichia coli O6:H1 (strain CFT073 / ATCC 700928 / UPEC)).